Reading from the N-terminus, the 557-residue chain is MSSVSKNARAYRQRKVGIKTVMPIYFERDIPDFDEEASLQRTVPLVESGVEKEEEEEKHLQQVINEAHEAIVRGSEKKLIIPTREAKNIGIIDKYYKKNFILPKTLIRFSLTVEECTNPEYCMDEHDTEYFLKLKQAQPSLSKFSELDFEIVMQTFEEEINQNQPFLSMDTSQILPLSELITSFELKDVLYLKPLASQVYPYWRERRISKGGLPIMAKAQVGDDKDDDDPYVCFRRREIRQARKTRRSDAQSYDRLRRLRQSMETSLQLLEQVYKREQKKLQALEDDYAIFQKRCLVKKLKRTLNIKDSDELLINPKRRPIEVKPAAPVPTPAPPVKTSPHPASYRPQPTRNVEVRPLLMLDDVQSAQITQFQIRLQQRLTKKEQLDRNWVDLLETPSTVIHTNYPDSFYRNIIPYYSGKETKQSHNQLSIPSSTPSTPLSDNGPTYSTPHSSLSNFNTCDSLSFSSNNSLYGYSTLLHPRNPICVRQRIGRGGRLMLDRTRALPVHRLSKPKSRVEDRWLFDIPFDADDTIILDDESDASIMFRASLLNDDMGTQS.

Disordered stretches follow at residues 323-349 (VKPAAPVPTPAPPVKTSPHPASYRPQP) and 424-449 (QSHNQLSIPSSTPSTPLSDNGPTYST). Pro residues predominate over residues 327–337 (APVPTPAPPVK). Positions 429–441 (LSIPSSTPSTPLS) are enriched in low complexity.

It belongs to the enhancer of polycomb family. Component of the NuA4 histone acetyltransferase complex.

It is found in the nucleus. Functionally, component of the NuA4 histone acetyltransferase complex which is involved in transcriptional activation of selected genes principally by acetylation of nucleosomal histone H4 and H2A. The NuA4 complex is also involved in DNA repair. Involved in gene silencing by neighboring heterochromatin, blockage of the silencing spreading along the chromosome, and required for cell cycle progression through G2/M. The chain is Enhancer of polycomb-like protein 1 (epl1) from Schizosaccharomyces pombe (strain 972 / ATCC 24843) (Fission yeast).